A 475-amino-acid chain; its full sequence is Ribulose bisphosphate carboxylase large chain (475 aa).

A propeptide spanning residues 1–2 (MS) is cleaved from the precursor. The residue at position 3 (P3) is an N-acetylproline. Position 14 is an N6,N6,N6-trimethyllysine (K14). N123 and T173 together coordinate substrate. K175 serves as the catalytic Proton acceptor. A substrate-binding site is contributed by K177. Mg(2+)-binding residues include K201, D203, and E204. K201 is subject to N6-carboxylysine. H294 functions as the Proton acceptor in the catalytic mechanism. Residues R295, H327, and S379 each contribute to the substrate site.

The protein belongs to the RuBisCO large chain family. Type I subfamily. Heterohexadecamer of 8 large chains and 8 small chains; disulfide-linked. The disulfide link is formed within the large subunit homodimers. The cofactor is Mg(2+). The disulfide bond which can form in the large chain dimeric partners within the hexadecamer appears to be associated with oxidative stress and protein turnover.

The protein localises to the plastid. Its subcellular location is the chloroplast. The enzyme catalyses 2 (2R)-3-phosphoglycerate + 2 H(+) = D-ribulose 1,5-bisphosphate + CO2 + H2O. It catalyses the reaction D-ribulose 1,5-bisphosphate + O2 = 2-phosphoglycolate + (2R)-3-phosphoglycerate + 2 H(+). Its function is as follows. RuBisCO catalyzes two reactions: the carboxylation of D-ribulose 1,5-bisphosphate, the primary event in carbon dioxide fixation, as well as the oxidative fragmentation of the pentose substrate in the photorespiration process. Both reactions occur simultaneously and in competition at the same active site. This chain is Ribulose bisphosphate carboxylase large chain, found in Larix occidentalis (Western larch).